The primary structure comprises 549 residues: Fas-activated serine/threonine kinase (549 aa).

The disordered stretch occupies residues Met-1–Pro-30. The RAP domain maps to Val-477 to Gln-535.

It belongs to the FAST protein kinase family. As to quaternary structure, interacts with TIA1; the interactions leads to TIA1 phosphorylation. Interacts with TIAR. Autophosphorylated on serine/threonine residues. Activated by dephosphorylation. In terms of tissue distribution, expressed in heart, brain, placenta, lung, liver, skeletal muscle, kidney and pancreas.

The protein resides in the mitochondrion matrix. It carries out the reaction L-seryl-[Fas-activated protein] + ATP = O-phospho-L-seryl-[Fas-activated protein] + ADP + H(+). The catalysed reaction is L-threonyl-[Fas-activated protein] + ATP = O-phospho-L-threonyl-[Fas-activated protein] + ADP + H(+). The enzyme catalyses L-seryl-[protein] + ATP = O-phospho-L-seryl-[protein] + ADP + H(+). It catalyses the reaction L-threonyl-[protein] + ATP = O-phospho-L-threonyl-[protein] + ADP + H(+). Phosphorylates the splicing regulator TIA1, thereby promoting the inclusion of FAS exon 6, which leads to an mRNA encoding a pro-apoptotic form of the receptor. In terms of biological role, required for the biogenesis of some mitochondrial-encoded mRNAs, specifically stabilizes ND6 (NADH dehydrogenase complex subunit 6) mRNA, and regulates its levels. The polypeptide is Fas-activated serine/threonine kinase (FASTK) (Homo sapiens (Human)).